A 237-amino-acid polypeptide reads, in one-letter code: Ribosomal RNA small subunit methyltransferase G (237 aa).

S-adenosyl-L-methionine-binding positions include Gly78, Phe83, 129-130, and Arg148; that span reads AE.

The protein belongs to the methyltransferase superfamily. RNA methyltransferase RsmG family.

The protein resides in the cytoplasm. Functionally, specifically methylates the N7 position of a guanine in 16S rRNA. The chain is Ribosomal RNA small subunit methyltransferase G from Streptococcus pyogenes serotype M18 (strain MGAS8232).